The chain runs to 1209 residues: Calcium-activated potassium channel subunit alpha-1 (1209 aa).

The segment covering 1-26 has biased composition (gly residues); it reads MANGGGGGGGGSSGSSGGGGGGGGGE. Disordered stretches follow at residues 1–29 and 42–64; these read MANGGGGGGGGSSGSSGGGGGGGGGETAL and LDASSSSSSSSSSSSSSSSSVHE. Over 1–87 the chain is Extracellular; that stretch reads MANGGGGGGG…VPCDSRGQRM (87 aa). The segment covering 45–61 has biased composition (low complexity); it reads SSSSSSSSSSSSSSSSS. The chain crosses the membrane as a helical span at residues 88–108; sequence WWAFLASSMVTFFGGLFIILL. Topologically, residues 109–179 are cytoplasmic; sequence WRTLKYLWTV…MISAQTLTGR (71 aa). Residues C119, C120, and C122 are each lipidated (S-palmitoyl cysteine). Residues 180–200 traverse the membrane as a helical segment; it reads VLVVLVFALSIGALVIYFIDS. The Extracellular portion of the chain corresponds to 201 to 215; it reads SNPIESCQNFYKDFT. A helical transmembrane segment spans residues 216–236; sequence LQIDMAFNVFFLLYFGLRFIA. Residues 237 to 240 are Cytoplasmic-facing; the sequence is ANDK. Residues 241–261 traverse the membrane as a helical segment; that stretch reads LWFWLEVNSVVDFFTVPPVFV. Topologically, residues 262–265 are extracellular; the sequence is SVYL. Residues 266-286 traverse the membrane as a helical; Voltage-sensor segment; the sequence is NRSWLGLRFLRALRLIQFSEI. Topologically, residues 287–301 are cytoplasmic; sequence LQFLNILKTSNSIKL. The helical transmembrane segment at 302-322 threads the bilayer; the sequence is VNLLSIFISTWLTAAGFIHLV. At 323 to 336 the chain is on the extracellular side; that stretch reads ENSGDPWENFQNNQ. The pore-forming intramembrane region spans 337–359; the sequence is ALTYWECVYLLMVTMSTVGYGDV. A Selectivity for potassium motif is present at residues 353-356; the sequence is TVGY. Over 360 to 368 the chain is Extracellular; it reads YAKTTLGRL. A helical transmembrane segment spans residues 369–389; that stretch reads FMVFFILGGLAMFASYVPEII. The Cytoplasmic segment spans residues 390-1209; that stretch reads ELIGNRKKYG…DKQKKEMVYR (820 aa). The RCK N-terminal 1 domain maps to 408–550; it reads RKHIVVCGHI…WNWKEGDDAI (143 aa). E440, Q463, and E465 together coordinate Mg(2+). The interval 557–577 is segment S7; that stretch reads LGFIAQSCLAQGLSTMLANLF. A segment S8 region spans residues 614-634; that stretch reads LSFPTVCELCFVKLKLLMIAI. A heme-binding motif region spans residues 682–686; the sequence is CKACH. Residues 704-734 are disordered; the sequence is EDEQPPTLSPKKKQRNGGMRNSPNTSPKLMR. A Phosphothreonine modification is found at T710. A phosphoserine mark is found at S712, S725, and S729. Residues 784-804 are segment S9; sequence VLSGHVVVCIFGDVSSALIGL. An RCK N-terminal 2 domain is found at 786-930; sequence SGHVVVCIFG…MDRSSPDNSP (145 aa). T917 carries the phosphothreonine modification. S925 and S929 each carry phosphoserine. The Calcium bowl motif lies at 977 to 999; it reads TELVNDTNVQFLDQDDDDDPDTE. Positions 986, 989, 992, and 994 each coordinate Ca(2+). Residues 1006-1026 are segment S10; the sequence is FACGTAFAVSVLDSLMSATYF. Over residues 1160–1185 the composition is skewed to low complexity; the sequence is RASLSHSSHSSQSSSKKSSSVHSIPS. The tract at residues 1160 to 1209 is disordered; the sequence is RASLSHSSHSSQSSSKKSSSVHSIPSTANRPNRPKSRESRDKQKKEMVYR. Basic and acidic residues predominate over residues 1194 to 1209; sequence KSRESRDKQKKEMVYR. 2 positions are modified to phosphoserine: S1195 and S1198.

This sequence belongs to the potassium channel family. Calcium-activated (TC 1.A.1.3) subfamily. KCa1.1/KCNMA1 sub-subfamily. Homotetramer; which constitutes the calcium-activated potassium channel. Interacts with beta subunits KCNMB1, KCNMB2, KCNMB3 and KCNMB4. Interacts with gamma subunits LRRC26, LRRC38, LRRC52 and LRRC55. Beta and gamma subunits are accessory, and modulate its activity. Interacts with RAB11B. Phosphorylated. Phosphorylation by kinases such as PKA and/or PKG. In smooth muscles, phosphorylation affects its activity. Post-translationally, palmitoylation by ZDHHC22 and ZDHHC23 within the intracellular linker between the S0 and S1 transmembrane domains regulates localization to the plasma membrane. Depalmitoylated by LYPLA1 and LYPLAL1, leading to retard exit from the trans-Golgi network.

Its subcellular location is the cell membrane. It is found in the endoplasmic reticulum membrane. The enzyme catalyses K(+)(in) = K(+)(out). Its activity is regulated as follows. Ethanol and carbon monoxide-bound heme increase channel activation. With respect to regulation, heme inhibits channel activation. Functionally, potassium channel activated by both membrane depolarization or increase in cytosolic Ca(2+) that mediates export of K(+). It is also activated by the concentration of cytosolic Mg(2+). Its activation dampens the excitatory events that elevate the cytosolic Ca(2+) concentration and/or depolarize the cell membrane. It therefore contributes to repolarization of the membrane potential. Plays a key role in controlling excitability in a number of systems, such as regulation of the contraction of smooth muscle, the tuning of hair cells in the cochlea, regulation of transmitter release, and innate immunity. In smooth muscles, its activation by high level of Ca(2+), caused by ryanodine receptors in the sarcoplasmic reticulum, regulates the membrane potential. In cochlea cells, its number and kinetic properties partly determine the characteristic frequency of each hair cell and thereby helps to establish a tonotopic map. Kinetics of KCNMA1 channels are determined by alternative splicing, phosphorylation status and its combination with modulating beta subunits. Highly sensitive to both iberiotoxin (IbTx) and charybdotoxin (CTX). Potassium channel activated by both membrane depolarization or increase in cytosolic Ca(2+) that mediates export of K(+). The chain is Calcium-activated potassium channel subunit alpha-1 (Kcnma1) from Rattus norvegicus (Rat).